The sequence spans 350 residues: Lipoyl synthase, mitochondrial (350 aa).

Residues Cys83, Cys88, Cys94, Cys113, Cys117, Cys120, and Ser328 each coordinate [4Fe-4S] cluster. Positions 96–317 constitute a Radical SAM core domain; that stretch reads GGESGTATAT…EKVGNELGFA (222 aa).

This sequence belongs to the radical SAM superfamily. Lipoyl synthase family. The cofactor is [4Fe-4S] cluster.

It is found in the mitochondrion. It catalyses the reaction [[Fe-S] cluster scaffold protein carrying a second [4Fe-4S](2+) cluster] + N(6)-octanoyl-L-lysyl-[protein] + 2 oxidized [2Fe-2S]-[ferredoxin] + 2 S-adenosyl-L-methionine + 4 H(+) = [[Fe-S] cluster scaffold protein] + N(6)-[(R)-dihydrolipoyl]-L-lysyl-[protein] + 4 Fe(3+) + 2 hydrogen sulfide + 2 5'-deoxyadenosine + 2 L-methionine + 2 reduced [2Fe-2S]-[ferredoxin]. It functions in the pathway protein modification; protein lipoylation via endogenous pathway; protein N(6)-(lipoyl)lysine from octanoyl-[acyl-carrier-protein]: step 2/2. In terms of biological role, catalyzes the radical-mediated insertion of two sulfur atoms into the C-6 and C-8 positions of the octanoyl moiety bound to the lipoyl domains of lipoate-dependent enzymes, thereby converting the octanoylated domains into lipoylated derivatives. This chain is Lipoyl synthase, mitochondrial, found in Trichoplax adhaerens (Trichoplax reptans).